The chain runs to 75 residues: UPF0352 protein VV1166 (75 aa).

The protein belongs to the UPF0352 family.

This Vibrio vulnificus (strain YJ016) protein is UPF0352 protein VV1166.